We begin with the raw amino-acid sequence, 125 residues long: Fumarate reductase subunit D (125 aa).

3 helical membrane-spanning segments follow: residues 30–50 (FAMLTPITVLVLGILVPLGVI), 62–82 (AFATSIIGALFIIGTLALPMW), and 105–125 (VACYAFAGLITALAVIFIFMI).

It belongs to the FrdD family. In terms of assembly, part of an enzyme complex containing four subunits: a flavoprotein (FrdA), an iron-sulfur protein (FrdB), and two hydrophobic anchor proteins (FrdC and FrdD).

Its subcellular location is the cell inner membrane. Functionally, anchors the catalytic components of the fumarate reductase complex to the cell membrane, binds quinones. The sequence is that of Fumarate reductase subunit D from Vibrio parahaemolyticus serotype O3:K6 (strain RIMD 2210633).